The chain runs to 576 residues: Glucose-6-phosphate 1-dehydrogenase 1, chloroplastic (576 aa).

Residues 1–50 (MATHSMIIPSPSSSSSSLATAASPFKETLPLFSRSLTFPRKSLFSQVRLR) constitute a chloroplast transit peptide. NADP(+) is bound by residues 97-104 (GASGDLAK) and Arg-131. A disulfide bond links Cys-149 and Cys-157. An NADP(+)-binding site is contributed by Lys-234. D-glucose 6-phosphate contacts are provided by residues Lys-234, 264 to 268 (HYLGK), Glu-302, and Asp-321. The Proton acceptor role is filled by His-326. Lys-419 provides a ligand contact to NADP(+). D-glucose 6-phosphate is bound by residues Lys-422 and Arg-427. Residues Arg-432 and Arg-461 each contribute to the NADP(+) site. Residue Gln-463 coordinates D-glucose 6-phosphate. Residues 469–471 (YLR) and Arg-554 contribute to the NADP(+) site.

This sequence belongs to the glucose-6-phosphate dehydrogenase family. In terms of assembly, forms homodimer. Interacts with G6PD2, G6PD3 and G6PD4. In terms of tissue distribution, expressed in leaves, stems, buds, flowers and siliques.

It is found in the plastid. Its subcellular location is the chloroplast stroma. The protein resides in the peroxisome. It catalyses the reaction D-glucose 6-phosphate + NADP(+) = 6-phospho-D-glucono-1,5-lactone + NADPH + H(+). It functions in the pathway carbohydrate degradation; pentose phosphate pathway; D-ribulose 5-phosphate from D-glucose 6-phosphate (oxidative stage): step 1/3. With respect to regulation, regulated by metabolites. Post-translationally inactivated by cysteine-mediated redox modification via the ferredoxin-thioredoxin system in the light and this avoids futile cycles with photosynthetic CO2 fixation. Catalyzes the rate-limiting step of the oxidative pentose-phosphate pathway, which represents a route for the dissimilation of carbohydrates besides glycolysis. The main function of this enzyme is to provide reducing power (NADPH) and pentose phosphates for fatty acid and nucleic acid synthesis which are involved in membrane synthesis and cell division. The protein is Glucose-6-phosphate 1-dehydrogenase 1, chloroplastic of Arabidopsis thaliana (Mouse-ear cress).